The following is a 206-amino-acid chain: Large ribosomal subunit protein uL22m (206 aa).

The N-terminal 40 residues, 1 to 40 (MAAALLRELGALWVPNLRIWTTQMLRVLPQSCIHTSTSLD), are a transit peptide targeting the mitochondrion.

This sequence belongs to the universal ribosomal protein uL22 family. As to quaternary structure, component of the mitochondrial ribosome large subunit (39S) which comprises a 16S rRNA and about 50 distinct proteins.

It localises to the mitochondrion. The sequence is that of Large ribosomal subunit protein uL22m (Mrpl22) from Rattus norvegicus (Rat).